The following is a 256-amino-acid chain: Fibroblast growth factor 3 (256 aa).

A signal peptide spans 1–18 (MVIILLLLLLSFLDPSLE). Disordered regions lie at residues 31 to 54 (APCA…GGVY), 151 to 176 (RHHA…SSKR), and 219 to 256 (LRES…RADI). The span at 238 to 256 (ERRRRRHRGSKGHNRRADI) shows a compositional bias: basic residues.

This sequence belongs to the heparin-binding growth factors family.

Its subcellular location is the secreted. In terms of biological role, plays an important role in the regulation of embryonic development, cell proliferation, and cell differentiation. The sequence is that of Fibroblast growth factor 3 (fgf3) from Danio rerio (Zebrafish).